A 294-amino-acid chain; its full sequence is uncharacterized protein (294 aa).

The tract at residues 1-215 (MTTAITPDKK…DQDDDDQKDL (215 aa)) is disordered. 2 stretches are compositionally biased toward basic residues: residues 27 to 43 (TKPR…KSKK) and 50 to 78 (AKKR…KKAP). Positions 79-88 (MKAPSKPAAK) are enriched in low complexity. The span at 92-102 (QQAQASLQKPI) shows a compositional bias: polar residues. Over residues 118–136 (PRPPTPIPPTGVKPEPAPR) the composition is skewed to pro residues. Residues 145 to 160 (SVSSTTPRTSATTGTT) are compositionally biased toward low complexity.

This is an uncharacterized protein from Caenorhabditis elegans.